Here is a 353-residue protein sequence, read N- to C-terminus: Photosystem II D2 protein (353 aa).

The residue at position 2 (Thr-2) is an N-acetylthreonine. Thr-2 carries the phosphothreonine modification. A helical membrane pass occupies residues 41-61 (CAYFALGGWFTGTTFVTSWYT). His-118 contacts chlorophyll a. The helical transmembrane segment at 125–141 (GFMLRQFELARSVQLRP) threads the bilayer. Positions 130 and 143 each coordinate pheophytin a. Residues 153–166 (VFVSVFLIYPLGQS) traverse the membrane as a helical segment. A chlorophyll a-binding site is contributed by His-198. Residues 208–228 (AALLCAIHGATVENTLFEDGD) traverse the membrane as a helical segment. 2 residues coordinate a plastoquinone: His-215 and Phe-262. Residue His-215 coordinates Fe cation. A Fe cation-binding site is contributed by His-269. The helical transmembrane segment at 279–295 (GLWMSAIGVVGLALNLR) threads the bilayer.

The protein belongs to the reaction center PufL/M/PsbA/D family. As to quaternary structure, PSII is composed of 1 copy each of membrane proteins PsbA, PsbB, PsbC, PsbD, PsbE, PsbF, PsbH, PsbI, PsbJ, PsbK, PsbL, PsbM, PsbT, PsbX, PsbY, PsbZ, Psb30/Ycf12, at least 3 peripheral proteins of the oxygen-evolving complex and a large number of cofactors. It forms dimeric complexes. It depends on The D1/D2 heterodimer binds P680, chlorophylls that are the primary electron donor of PSII, and subsequent electron acceptors. It shares a non-heme iron and each subunit binds pheophytin, quinone, additional chlorophylls, carotenoids and lipids. There is also a Cl(-1) ion associated with D1 and D2, which is required for oxygen evolution. The PSII complex binds additional chlorophylls, carotenoids and specific lipids. as a cofactor.

The protein resides in the plastid. It is found in the chloroplast thylakoid membrane. The enzyme catalyses 2 a plastoquinone + 4 hnu + 2 H2O = 2 a plastoquinol + O2. In terms of biological role, photosystem II (PSII) is a light-driven water:plastoquinone oxidoreductase that uses light energy to abstract electrons from H(2)O, generating O(2) and a proton gradient subsequently used for ATP formation. It consists of a core antenna complex that captures photons, and an electron transfer chain that converts photonic excitation into a charge separation. The D1/D2 (PsbA/PsbD) reaction center heterodimer binds P680, the primary electron donor of PSII as well as several subsequent electron acceptors. D2 is needed for assembly of a stable PSII complex. The chain is Photosystem II D2 protein from Cryptomeria japonica (Japanese cedar).